A 372-amino-acid polypeptide reads, in one-letter code: D-alanine--D-alanine ligase (372 aa).

In terms of domain architecture, ATP-grasp spans 145–349; it reads KTVLRAGGIP…CPNLLDQLIE (205 aa). 176–231 is an ATP binding site; it reads DRWGTSELFVKAVSLGSSVATLPVKTETEFTKAVKEVFRYDDRLMVEPRIRGREIE. Residues Asp303, Glu316, and Asn318 each coordinate Mg(2+).

Belongs to the D-alanine--D-alanine ligase family. Mg(2+) is required as a cofactor. The cofactor is Mn(2+).

The protein resides in the cytoplasm. The enzyme catalyses 2 D-alanine + ATP = D-alanyl-D-alanine + ADP + phosphate + H(+). Its pathway is cell wall biogenesis; peptidoglycan biosynthesis. Cell wall formation. The polypeptide is D-alanine--D-alanine ligase (Coxiella burnetii (strain CbuK_Q154) (Coxiella burnetii (strain Q154))).